The chain runs to 1452 residues: Arf-GAP with Rho-GAP domain, ANK repeat and PH domain-containing protein 1 (1452 aa).

One can recognise an SAM domain in the interval 6 to 70; the sequence is DAALSVAEWL…LAGLHRAHAP (65 aa). The interval 81-90 is required for interaction with SH3KBP1; that stretch reads PVPMKRHIFR. 2 disordered regions span residues 87-258 and 271-304; these read HIFR…LPSR and EGEE…LNPP. Pro residues-rich tracts occupy residues 92–104, 154–167, and 205–225; these read PPVP…PPPT, SVPP…PPYP, and PLQP…PPRL. 2 stretches are compositionally biased toward acidic residues: residues 228 to 239 and 271 to 286; these read EFDDSDYDDVPE and EGEE…DDDH. Position 232 is a phosphoserine (Ser-232). Tyr-234 carries the phosphotyrosine; by PTK6 modification. Residues 329 to 421 form the PH 1 domain; it reads PVIKAGWLDK…WMQALQQAVV (93 aa). Ser-430 carries the post-translational modification Phosphoserine. Residues 442–531 form the PH 2 domain; sequence QPDRAGSLEL…WLEAMQGAIA (90 aa). A Phosphotyrosine modification is found at Tyr-506. Residues 537–662 form the Arf-GAP domain; the sequence is SEVAERIWAA…RYHPLFGNQE (126 aa). The C4-type zinc-finger motif lies at 552-575; that stretch reads CADCGAAQPDWASINLCVVICKRC. A Phosphoserine modification is found at Ser-740. Residues 745 to 852 form the PH 3 domain; sequence TVSHSGFLYK…WVKCIAKAFV (108 aa). The Rho-GAP domain maps to 956 to 1141; sequence ASLGDTLSEQ…DLINHYVVVF (186 aa). The region spanning 1174–1263 is the Ras-associating domain; it reads GDFICTVYLE…SHLVVKKYQS (90 aa). The PH 4 domain occupies 1276–1398; the sequence is GDTKHGMMKF…WFATFLSVQH (123 aa). Residues Ser-1430 and Ser-1437 each carry the phosphoserine modification.

As to quaternary structure, interacts with SH3KBP1/CIN85 (via SH3 domains). The interaction is independent of EGF and does not affect ARAP1 GTPase-activating activity but is involved in regulating ubiquitination and endocytic trafficking of EGFR. ARAP1 competes with E3 ubiquitin-protein ligase CBL for binding to SH3KBP1, preventing interaction of CBL with SH3KBP1; this is likely to regulate SH3KBP1-mediated internalization of EGFR. Interacts with TNFRSF10A. Phosphorylated by PTK6 following EGF stimulation which enhances EGFR signaling by delaying EGFR down-regulation; the interaction is mediated by the SH2 domain of PTK6. Phosphorylation promotes association with the Golgi apparatus and endosomes. As to expression, expressed in the retina where it is detected in Mueller glia (at protein level). Also detected in the retinal pigment epithelium (at protein level). Expressed in osteoclasts (at protein level).

It is found in the cytoplasm. It localises to the golgi apparatus. The protein resides in the trans-Golgi network. Its subcellular location is the golgi stack membrane. The protein localises to the cell membrane. It is found in the endosome. It localises to the multivesicular body. The protein resides in the cell projection. Its subcellular location is the ruffle. The protein localises to the podosome. It is found in the early endosome. Functionally, phosphatidylinositol 3,4,5-trisphosphate-dependent GTPase-activating protein that modulates actin cytoskeleton remodeling by regulating ARF and RHO family members. Activated by phosphatidylinositol 3,4,5-trisphosphate (PtdIns(3,4,5)P3) binding and, to a lesser extent, by phosphatidylinositol 3,4-bisphosphate (PtdIns(3,4)P2) binding. Has a preference for ARF1 and ARF5. Positively regulates the ring size of circular dorsal ruffles and promotes macropinocytosis. Acts as a bridging factor in osteoclasts to control actin and membrane dynamics. Regulates the condensing of osteoclast podosomes into sealing zones which segregate the bone-facing membrane from other membrane domains and are required for osteoclast resorption activity. Also regulates recruitment of the AP-3 complex to endosomal membranes and trafficking of lysosomal membrane proteins to the ruffled membrane border of osteoclasts to modulate bone resorption. Regulates the endocytic trafficking of EGFR. Regulates the incorporation of CD63 and CD9 into multivesicular bodies. Required in the retinal pigment epithelium (RPE) for photoreceptor survival due to its role in promoting RPE phagocytosis. This chain is Arf-GAP with Rho-GAP domain, ANK repeat and PH domain-containing protein 1, found in Mus musculus (Mouse).